The primary structure comprises 940 residues: Coatomer subunit beta (940 aa).

4 HEAT repeats span residues 11-48 (FLEA…NGDS), 90-125 (QEMI…KEPE), 126-162 (LLDP…VSNH), and 310-347 (SILE…SRNV).

In terms of assembly, oligomeric complex that consists of at least the alpha, beta, beta', gamma, delta, epsilon and zeta subunits.

Its subcellular location is the cytoplasm. The protein localises to the golgi apparatus membrane. It localises to the cytoplasmic vesicle. It is found in the COPI-coated vesicle membrane. Its function is as follows. The coatomer is a cytosolic protein complex that binds to dilysine motifs and reversibly associates with Golgi non-clathrin-coated vesicles, which further mediate biosynthetic protein transport from the ER, via the Golgi up to the trans Golgi network. Coatomer complex is required for budding from Golgi membranes, and is essential for the retrograde Golgi-to-ER transport of dilysine-tagged proteins. This Schizosaccharomyces pombe (strain 972 / ATCC 24843) (Fission yeast) protein is Coatomer subunit beta (sec26).